The following is a 133-amino-acid chain: Male-specific protein scotti (133 aa).

Residues 11–57 (FPSNGLGNNNNDPNQQRGERPRQPHPDLGWILDAPNEPPRNRNPLLY) are disordered. A compositionally biased stretch (low complexity) spans 14–24 (NGLGNNNNDPN). Asn83 carries an N-linked (GlcNAc...) asparagine glycan.

Belongs to the male-specific scotti family.

Functionally, post-meiotically transcribed gene that has a role in late spermiogenesis; required for actin cone progression during spermatid individualization. This is Male-specific protein scotti from Drosophila persimilis (Fruit fly).